The chain runs to 152 residues: Large ribosomal subunit protein bL9 (152 aa).

This sequence belongs to the bacterial ribosomal protein bL9 family.

Binds to the 23S rRNA. The chain is Large ribosomal subunit protein bL9 from Mycobacterium ulcerans (strain Agy99).